The sequence spans 852 residues: DNA mismatch repair protein MutS (852 aa).

ATP is bound at residue 602–609 (GPNMSGKS).

It belongs to the DNA mismatch repair MutS family.

Functionally, this protein is involved in the repair of mismatches in DNA. It is possible that it carries out the mismatch recognition step. This protein has a weak ATPase activity. The polypeptide is DNA mismatch repair protein MutS (Streptococcus thermophilus (strain ATCC BAA-250 / LMG 18311)).